The primary structure comprises 112 residues: Nucleoid-associated protein FTF0810c (112 aa).

The interval 1–27 (MNFDMSKLMQQAQKMQEQMKKAQQERE) is disordered. Over residues 17–27 (EQMKKAQQERE) the composition is skewed to basic and acidic residues.

The protein belongs to the YbaB/EbfC family. Homodimer.

The protein resides in the cytoplasm. It localises to the nucleoid. Functionally, binds to DNA and alters its conformation. May be involved in regulation of gene expression, nucleoid organization and DNA protection. In Francisella tularensis subsp. tularensis (strain FSC 198), this protein is Nucleoid-associated protein FTF0810c.